We begin with the raw amino-acid sequence, 224 residues long: Large ribosomal subunit protein uL1c (224 aa).

It belongs to the universal ribosomal protein uL1 family. Part of the 50S ribosomal subunit.

The protein resides in the plastid. It is found in the chloroplast. Functionally, binds directly to 23S rRNA. Might be involved in E site tRNA release (Potential). The sequence is that of Large ribosomal subunit protein uL1c (rpl1) from Cyanidioschyzon merolae (strain NIES-3377 / 10D) (Unicellular red alga).